A 314-amino-acid polypeptide reads, in one-letter code: Short chain dehydrogenase atnD (314 aa).

Residues leucine 41, lysine 66, aspartate 90, and asparagine 116 each contribute to the NADP(+) site. Active-site proton donor residues include serine 171 and tyrosine 204. Residues tyrosine 204 and lysine 208 each contribute to the NADP(+) site. Catalysis depends on lysine 208, which acts as the Lowers pKa of active site Tyr.

Belongs to the short-chain dehydrogenases/reductases (SDR) family.

Its pathway is secondary metabolite biosynthesis. Its function is as follows. Short chain dehydrogenase; part of the gene cluster that mediates the biosynthesis of aspercryptins, linear lipopeptides built from six amino acids including 2 highly unusual and nonproteogenic amino acids, 2-amino-octanoic acid (2aoa) and 2-amino-dodecanol (2adol). The core structure of aspercryptins is as follows: Ser/Ala-Thr-Ile/Val-2aoa-Asn-2adol. The first step of aspercryptin biosynthesis is the generation of the fatty acid precursors, octanoic and dodecanoic acids, by the FAS subunits atnF and atnM. The fatty acid precursors are likely transformed into the corresponding alpha-amino fatty acids in three steps. First, they are hydroxylated by the cytochrome P450 monooxygenase atnE, then oxidized to the corresponding alpha-keto acids by the NAD(P)-dependent oxidoreductase atnD, and finally converted to the alpha-amino fatty acids by the PLP-dependent aminotransferases atnH or atnJ. the alpha-amino fatty acids, 2-amino-octanoic and 2-amino-dodecanoic acids, are recognized, activated, and covalently tethered to the NRPS atnA by its fourth and sixth adenylation domains. The second module of atnA is the Thr module and contains an epimerase (E) domain responsible for the epimerization of Thr to D-allo-Thr. Additionally, despite atnA having only one epimerase domain, the first amino acid of aspercryptin A1 is D-Ser, suggesting that serine is either loaded directly as D-Ser on the first module or that the epimerase domain in the threonine module epimerizes both L-Ser and L-Thr. After condensation of the hexapeptide of aspercryptin, the C-terminal reductase (TE) domain might be involved in the reductive release and production of the aldehyde hexapeptide. Further reduction would generate aspercryptins. The variety of aspercryptins produced reflects the flexibility of the atnA NRPS, allowing incorporation of alanine instead of serine, valine for isoleucine, and a C10 fatty amino alcohol instead of the C12 version. AtnB seems to be involved in the selectivity for Ile versus Val by the third module. Moreover, type B, C and D aspercryptins have an additional N-terminal cichorine, acetyl and propionyl group respectively. The protein is Short chain dehydrogenase atnD of Emericella nidulans (strain FGSC A4 / ATCC 38163 / CBS 112.46 / NRRL 194 / M139) (Aspergillus nidulans).